The sequence spans 322 residues: Quinolinate synthase (322 aa).

Iminosuccinate contacts are provided by His36 and Ser53. Cys98 provides a ligand contact to [4Fe-4S] cluster. Residues 124–126 (YIN) and Ser141 each bind iminosuccinate. Cys184 is a [4Fe-4S] cluster binding site. Iminosuccinate is bound by residues 210-212 (HPE) and Thr227. Cys278 is a [4Fe-4S] cluster binding site.

The protein belongs to the quinolinate synthase family. Type 2 subfamily. [4Fe-4S] cluster serves as cofactor.

Its subcellular location is the cytoplasm. It catalyses the reaction iminosuccinate + dihydroxyacetone phosphate = quinolinate + phosphate + 2 H2O + H(+). It functions in the pathway cofactor biosynthesis; NAD(+) biosynthesis; quinolinate from iminoaspartate: step 1/1. In terms of biological role, catalyzes the condensation of iminoaspartate with dihydroxyacetone phosphate to form quinolinate. The chain is Quinolinate synthase from Chloroherpeton thalassium (strain ATCC 35110 / GB-78).